The sequence spans 252 residues: uncharacterized protein (252 aa).

It localises to the plastid. Its subcellular location is the chloroplast. This is an uncharacterized protein from Guillardia theta (Cryptophyte).